The chain runs to 865 residues: Alanine--tRNA ligase (865 aa).

Zn(2+)-binding residues include histidine 554, histidine 558, cysteine 656, and histidine 660.

The protein belongs to the class-II aminoacyl-tRNA synthetase family. Zn(2+) serves as cofactor.

It localises to the cytoplasm. The enzyme catalyses tRNA(Ala) + L-alanine + ATP = L-alanyl-tRNA(Ala) + AMP + diphosphate. Functionally, catalyzes the attachment of alanine to tRNA(Ala) in a two-step reaction: alanine is first activated by ATP to form Ala-AMP and then transferred to the acceptor end of tRNA(Ala). Also edits incorrectly charged Ser-tRNA(Ala) and Gly-tRNA(Ala) via its editing domain. This Francisella tularensis subsp. mediasiatica (strain FSC147) protein is Alanine--tRNA ligase.